The sequence spans 78 residues: Putative Fe(2+) transport protein A (78 aa).

It belongs to the FeoA family.

Might be involved in Fe(2+) ion uptake. This Helicobacter pylori (strain J99 / ATCC 700824) (Campylobacter pylori J99) protein is Putative Fe(2+) transport protein A.